Reading from the N-terminus, the 637-residue chain is tRNA uridine 5-carboxymethylaminomethyl modification enzyme MnmG (637 aa).

Residues 15-20 (GAGHAG), isoleucine 127, and serine 182 contribute to the FAD site. 276–290 (GPRYCPSIEDKIVRF) lines the NAD(+) pocket. Glutamine 373 contributes to the FAD binding site.

The protein belongs to the MnmG family. As to quaternary structure, homodimer. Heterotetramer of two MnmE and two MnmG subunits. It depends on FAD as a cofactor.

It localises to the cytoplasm. Its function is as follows. NAD-binding protein involved in the addition of a carboxymethylaminomethyl (cmnm) group at the wobble position (U34) of certain tRNAs, forming tRNA-cmnm(5)s(2)U34. This chain is tRNA uridine 5-carboxymethylaminomethyl modification enzyme MnmG, found in Streptococcus pneumoniae serotype 4 (strain ATCC BAA-334 / TIGR4).